A 55-amino-acid chain; its full sequence is DNA-binding protein (55 aa).

Positions 1–55 are disordered; that stretch reads MVYRRRRRSSTGTTYGSTRRRRSSGYRRRPGRPRTYRRSRSRSSTGRRSYRTRYY. Repeat copies occupy residues 5-10 and 19-24. The tract at residues 5-24 is 2 X 6 AA repeats of R-R-R-R-S-S; that stretch reads RRRRSSTGTTYGSTRRRRSS. Residues 18–41 show a composition bias toward basic residues; the sequence is TRRRRSSGYRRRPGRPRTYRRSRS.

In terms of assembly, interacts with protein AC132. Phosphorylated.

It localises to the virion. It is found in the host cytoplasm. Its function is as follows. Plays a role in viral DNA packaging and nucleocapsid assembly. Promotes viral gene transcription during the late stage of infection while it is non-essential for the basal level of viral gene transcription. This Lepidoptera (butterflies and moths) protein is DNA-binding protein (P6.9).